Reading from the N-terminus, the 20-residue chain is WESGDLELFDLVEEVXLNFY.

Over 1-20 (WESGDLELFDLVEEVXLNFY) the chain is Lumenal. The region spanning 18 to 20 (NFY) is the J domain.

Interacts (via SANT 2 domain) with SERPINA3; the interaction delays the formation of the covalent inhibitory complex SERPINA3-chymotrypsin, but does not alter the catalytic activity of SERPINA3. Interacts (via SANT 2 domain) with ITIH4 (via C-terminus); the interaction protects ITIH4 against in vitro cleavage by kallikrein. Interacts (via J domain) with HSPA5. Interacts (via cytosolic domain) with ribosomes.

It localises to the endoplasmic reticulum membrane. The protein resides in the nucleus membrane. Its subcellular location is the microsome membrane. This Canis lupus familiaris (Dog) protein is DnaJ homolog subfamily C member 1 (DNAJC1).